Reading from the N-terminus, the 372-residue chain is Ephrin type-A receptor 8 (372 aa).

A Protein kinase domain is found at 2–263; the sequence is IHIEKIIGSG…HVVSVLEALV (262 aa). Residues 8–16 and Lys34 each bind ATP; that span reads IGSGESGEV. Asp127 (proton acceptor) is an active-site residue. Phosphotyrosine; by autocatalysis is present on Tyr206. Residues 297–372 form the SAM domain; it reads NGDLTVGDWL…SCTQGPRRHL (76 aa). The short motif at 370–372 is the PDZ-binding element; sequence RHL.

As to quaternary structure, heterotetramer upon binding of the ligand. The heterotetramer is composed of an ephrin dimer and a receptor dimer. Oligomerization is probably required to induce biological responses. May also form heterodimers with other ephrin receptors. Interacts with FYN; possible downstream effector of EPHA8 in regulation of cell adhesion. Interacts with PIK3CG; regulates integrin-mediated cell adhesion to substrate. Interacts with TIAM1; regulates clathrin-mediated endocytosis of EPHA8. Interacts with ANKS1A and ANKS1B; EPHA8 kinase activity-independent but stimulated by EPHA8 ubiquitination. Phosphorylated. Phosphorylation is stimulated upon binding of its ligands including EFNA2, EFNA3 and EFNA5. Autophosphorylation on Tyr-206 modulates tyrosine kinase activity. Post-translationally, ubiquitinated. Ubiquitination by CBL regulates the receptor stability and activity through proteasomal degradation. ANKS1A prevents ubiquitination and degradation. In terms of tissue distribution, most abundant in brain.

It is found in the cell membrane. The protein localises to the cell projection. The protein resides in the early endosome membrane. The catalysed reaction is L-tyrosyl-[protein] + ATP = O-phospho-L-tyrosyl-[protein] + ADP + H(+). Its function is as follows. Receptor tyrosine kinase which binds promiscuously GPI-anchored ephrin-A family ligands residing on adjacent cells, leading to contact-dependent bidirectional signaling into neighboring cells. The signaling pathway downstream of the receptor is referred to as forward signaling while the signaling pathway downstream of the ephrin ligand is referred to as reverse signaling. The GPI-anchored ephrin-A EFNA2, EFNA3, and EFNA5 are able to activate EPHA8 through phosphorylation. With EFNA5 may regulate integrin-mediated cell adhesion and migration on fibronectin substrate but also neurite outgrowth. During development of the nervous system also plays a role in axon guidance. Downstream effectors of the EPHA8 signaling pathway include FYN which promotes cell adhesion upon activation by EPHA8 and the MAP kinases in the stimulation of neurite outgrowth. This is Ephrin type-A receptor 8 (Epha8) from Rattus norvegicus (Rat).